The primary structure comprises 569 residues: MGALFMVKSKAIMIGAGLSNMAAAVYLIQDGHWDGKDITFYGVDMHGANDGGATTDFTNEYWNKNHPMANTTGYVARGGRMLNYRTYVDLMDLLDRIPSVTEPGMTAAEDTRDFDAKHRTYDIARLMQGGKGIINAGKLGFNNKDRTLLTKLIMMPDSEETKLDNVSIAEYFKDDPHMFQTNFWYMWETTFAFRTQSSAQELRRYMHQMIYEFTQIEHLVGVNRTRYNQFESMILPLIKYLQGQGVTFIDNKIVKDWQFKDTPMQDEITVTGLVIEDAQTGETEEVEVDEDTAVIFTNGSITDSATMGDYNTPAPENMDYGVSASLWKKATERFYNLGTPDKFFNDRNASEWVSFTLTTKNHLFLNEIVRITTQEPGNALNSFLSTTPITPLNQKDVNMSIVVHHQPHFTTQQPNETVLWGYFLYPRRQGEFVNKPYIKMTGKEMAQELIGQLSKVDPGPGNIKDKEKENLDSIVNNIPVYMPYASALFNNRAKSDRPEVLPKHSTNLAFTGEFAEQPYQMIFTEQSAVRSGEIAAYHFAGVPMDNLVKTPRYDKDPKTLLKATKKMFD.

Tyr87 serves as a coordination point for FAD. The Proton donor role is filled by Tyr205. FAD-binding residues include Val254, Ser300, and Thr524.

The protein belongs to the oleate hydratase family. It depends on FAD as a cofactor.

It localises to the cell membrane. It is found in the cytoplasm. It carries out the reaction (9Z,12Z)-octadecadienoate + H2O = (10S)-hydroxy-(12Z)-octadecenoate. The catalysed reaction is (10E,12Z)-octadecadienoate + H2O = (10S)-hydroxy-(12Z)-octadecenoate. The enzyme catalyses (9Z)-octadecenoate + H2O = 10-hydroxyoctadecanoate. It catalyses the reaction (10E)-octadecenoate + H2O = 10-hydroxyoctadecanoate. It carries out the reaction (9E,11E)-octadecadienoate + H2O = 10-hydroxy-(11E)-octadecenoate. The catalysed reaction is (9Z,11E)-octadecadienoate + H2O = 10-hydroxy-(11E)-octadecenoate. The enzyme catalyses (9Z)-hexadecenoate + H2O = 10-hydroxyhexadecanoate. It catalyses the reaction (9Z,12Z,15Z)-octadecatrienoate + H2O = (10S)-hydroxy-(12Z,15Z)-octadecadienoate. It carries out the reaction (6Z,9Z,12Z)-octadecatrienoate + H2O = (10S)-hydroxy-(6Z,12Z)-octadecadienoate. The catalysed reaction is (6Z,9Z,12Z,15Z)-octadecatetraenoate + H2O = (10S)-hydroxy-(6Z,12Z,15Z)-octadecatrienoate. The protein operates within lipid metabolism; fatty acid metabolism. With respect to regulation, the addition of NADH or NADPH highly increases catalytic activity, likely by reducing the cofactor FAD to FADH2. The hydration and dehydration reactions are strongly inhibited by Ag(+), Fe(2+), Cu(2+), Zn(2+), Hg(2+), and Fe(3+). Its function is as follows. Is involved in a saturation metabolic pathway of polyunsaturated fatty acids, that detoxifies unsaturated fatty acids and generates hydroxy fatty acids, oxo fatty acids, conjugated fatty acids such as conjugated linoleic acids (CLAs), and partially saturated trans-fatty acids as intermediates. CLA-HY catalyzes the hydration and dehydration steps in the production of 10-hydroxy-cis-12-octadecenoate, trans-10,cis-12-CLA, cis-9,trans-11-CLA, trans-9,trans-11-CLA, oleate and trans-10-octadecenoate during linoleate metabolism. Is also able to hydrate palmitoleic acid (cis-9-hexadecenoic acid), oleic acid, alpha-linolenic acid, gamma-linolenic acid, and stearidonic acid into the corresponding 10-hydroxy fatty acids, and dehydrate 10-hydroxy-cis-12,cis-15-octadecadienoic acid, 10-hydroxy-cis-6,cis-12-octadecadienoic acid, and 10-hydroxyoctadecanoic acid into the corresponding fatty acids with cis double bonds at the Delta9 position. As part of the gut microbiome, this enzyme modifies host fatty acid composition and is expected to improve human health by altering lipid metabolism related to the onset of metabolic syndrome. Shows regioselectivity for Delta9 double bond hydration, generating C10 hydroxy groups in the (S)-configuration with high enantioselectivity, when another double bond is in position 12. Is not able to hydrate fatty acids with a trans carbon-carbon double bond at Delta9 position (elaidic acid, trans-9-octadecenoic acid), fatty acid esters (methyl linoleate, monolinolein, dilinolein, and trilinolein), and conjugated fatty acids (conjugated linoleic acids), as well as fatty acids with other chain lengths, such as myristoleic acid (cis-9-tetradecenoic acid), arachidonic acid (cis-5,cis-8,cis-11,cis-14-eicosatetraenoic acid), EPA (cis-5,cis-8,cis-11,cis-14,cis-17-eicosapentaenoic acid), DHA (cis-4,cis-7,cis-10,cis-13,cis-16,cis-19-docosahexaenoic acid) and fatty acids with a cis carbon-carbon double bond at Delta11 position, such as cis-vaccenic acid and cis-11-octadecenoic acid, or fatty alcohols, such as linoleyl alcohol. Is not able to dehydrate 12-hydroxy, 3-hydroxy, and 9-hydroxy fatty acids. This is Linoleate hydratase from Lactiplantibacillus plantarum (Lactobacillus plantarum).